The primary structure comprises 168 residues: Pathogenesis-related protein 1C (168 aa).

An N-terminal signal peptide occupies residues 1 to 30 (MEFVLFSQMSSFFLVSTLLLFLIISHSCHA). Residues 38 to 156 (LDAHNTARAD…NGGYIVSCNY (119 aa)) form the SCP domain.

It belongs to the CRISP family. Post-translationally, three disulfide bonds are present.

The protein localises to the vacuole. In terms of biological role, probably involved in the defense reaction of plants against pathogens. In Nicotiana tabacum (Common tobacco), this protein is Pathogenesis-related protein 1C.